Here is a 476-residue protein sequence, read N- to C-terminus: Acidic leucine-rich nuclear phosphoprotein 32-related protein 1 (476 aa).

LRR repeat units lie at residues S51–R72, N73–V92, and S98–A119. An LRRCT domain is found at C131 to D169. The segment at D157 to H476 is disordered. Composition is skewed to acidic residues over residues E165–G194, D222–E232, G252–V289, S299–P329, E353–L371, E379–E396, D415–G436, and G458–V467.

It belongs to the ANP32 family.

This chain is Acidic leucine-rich nuclear phosphoprotein 32-related protein 1, found in Oryza sativa subsp. japonica (Rice).